The primary structure comprises 357 residues: Peptide chain release factor 1 (357 aa).

Residue glutamine 234 is modified to N5-methylglutamine. The disordered stretch occupies residues 249–308; it reads PSGVEVSCQDEKSQHKNRSKAMRVLRSRVYEKKREEQQAEREEARRSMVGSGDRSAKIRT. Residues 263 to 274 are compositionally biased toward basic residues; the sequence is HKNRSKAMRVLR. A compositionally biased stretch (basic and acidic residues) spans 276–294; sequence RVYEKKREEQQAEREEARR.

Belongs to the prokaryotic/mitochondrial release factor family. Methylated by PrmC. Methylation increases the termination efficiency of RF1.

It is found in the cytoplasm. In terms of biological role, peptide chain release factor 1 directs the termination of translation in response to the peptide chain termination codons UAG and UAA. This is Peptide chain release factor 1 from Salinibacter ruber (strain DSM 13855 / M31).